The sequence spans 296 residues: MFVTLIKPLARLHPRAWDFVQLVRLDRPIGIYLLLWPTLWSLWIAADGVPELKNLLIFVLGVILMRAAGCVINDFADRNFDGHVARTKARPLATGKISVREAWITFAVLVALSFGLVLLTNATTVWLSFGAVAVASLYPFMKRYTYYPQVVLGAAYSWGILMAFTAERGELPASAWLLFLANVLWTVAYDSYYAMTDREDDLKIGIKSTAILFGDADRLIIGSLQGLTLLLLALAGSRFELGLYFYLGLAVAAACFVWEAWSTRDRDPQACFRAFLHNHWAGLAIFLGTVADYALR.

Transmembrane regions (helical) follow at residues I29–V49, L55–F75, A102–A122, Y146–A166, G169–Y189, L219–F239, L241–W261, and F275–L295.

Belongs to the UbiA prenyltransferase family. Requires Mg(2+) as cofactor.

It localises to the cell inner membrane. It carries out the reaction all-trans-octaprenyl diphosphate + 4-hydroxybenzoate = 4-hydroxy-3-(all-trans-octaprenyl)benzoate + diphosphate. It participates in cofactor biosynthesis; ubiquinone biosynthesis. Its function is as follows. Catalyzes the prenylation of para-hydroxybenzoate (PHB) with an all-trans polyprenyl group. Mediates the second step in the final reaction sequence of ubiquinone-8 (UQ-8) biosynthesis, which is the condensation of the polyisoprenoid side chain with PHB, generating the first membrane-bound Q intermediate 3-octaprenyl-4-hydroxybenzoate. In Pseudomonas aeruginosa (strain UCBPP-PA14), this protein is 4-hydroxybenzoate octaprenyltransferase.